Here is a 575-residue protein sequence, read N- to C-terminus: FAD-dependent monooxygenase rstn6 (575 aa).

Positions 1–17 (MYDVIVIGAGWCGLVAA) are cleaved as a signal peptide. Isoleucine 106 contributes to the FAD binding site. Residues asparagine 239 and asparagine 295 are each glycosylated (N-linked (GlcNAc...) asparagine).

Belongs to the FAD-binding monooxygenase family. The cofactor is FAD.

It participates in antifungal biosynthesis. Its function is as follows. FAD-dependent monooxygenase; part of the gene cluster that mediates the biosynthesis of the tetrahydropyranyl antifungal agent restricticin that acts as an inhibitor of CYP51 and blocks the ergosterol biosynthesis. The highly reducing polyketide synthase rstn3, the short chain dehydrogenase rstn4, the cyclase rstn5, the FAD-dependent monooxygenase rstn6 and the enoylreductase rstn7 are required to generate the first stable intermediate desmethylrestrictinol. Rstn3 with rstn7 biosynthesize the first polyketide chain intermediate that is reduced by rstn4, followed by epoxidation by rstn6 before 6-endo cyclization via epoxide opening by rstn5 leads to desmethylrestrictinol. The methyltransferase rstn1 then catalyzes the C4 O-methylation of desmethylrestrictinol to produce restrictinol, and the nonribosomal peptide synthetase rstn8 catalyzes the C3 esterification of restrictinol with glycine that leads to restricticin. The protein is FAD-dependent monooxygenase rstn6 of Aspergillus nomiae NRRL (strain ATCC 15546 / NRRL 13137 / CBS 260.88 / M93).